The following is a 413-amino-acid chain: S-adenosylmethionine synthase (413 aa).

H15 lines the ATP pocket. D17 serves as a coordination point for Mg(2+). Residue E43 participates in K(+) binding. E56 and Q100 together coordinate L-methionine. The flexible loop stretch occupies residues 100–110 (QSPDISQGVNE). ATP-binding positions include 171 to 173 (DGK), 248 to 249 (KF), D257, 263 to 264 (RK), A280, and K284. D257 is an L-methionine binding site. K288 contributes to the L-methionine binding site.

It belongs to the AdoMet synthase family. In terms of assembly, homotetramer; dimer of dimers. Requires Mg(2+) as cofactor. K(+) is required as a cofactor.

It is found in the cytoplasm. The catalysed reaction is L-methionine + ATP + H2O = S-adenosyl-L-methionine + phosphate + diphosphate. It functions in the pathway amino-acid biosynthesis; S-adenosyl-L-methionine biosynthesis; S-adenosyl-L-methionine from L-methionine: step 1/1. In terms of biological role, catalyzes the formation of S-adenosylmethionine (AdoMet) from methionine and ATP. The overall synthetic reaction is composed of two sequential steps, AdoMet formation and the subsequent tripolyphosphate hydrolysis which occurs prior to release of AdoMet from the enzyme. This Prochlorococcus marinus (strain MIT 9515) protein is S-adenosylmethionine synthase.